Reading from the N-terminus, the 287-residue chain is Probable endonuclease 4 (287 aa).

Residues histidine 69, histidine 109, glutamate 146, aspartate 180, histidine 183, histidine 217, aspartate 230, histidine 232, and glutamate 262 each coordinate Zn(2+).

Belongs to the AP endonuclease 2 family. The cofactor is Zn(2+).

The enzyme catalyses Endonucleolytic cleavage to 5'-phosphooligonucleotide end-products.. In terms of biological role, endonuclease IV plays a role in DNA repair. It cleaves phosphodiester bonds at apurinic or apyrimidinic (AP) sites, generating a 3'-hydroxyl group and a 5'-terminal sugar phosphate. The protein is Probable endonuclease 4 of Petrotoga mobilis (strain DSM 10674 / SJ95).